A 198-amino-acid chain; its full sequence is Proteasome subunit beta 1 (198 aa).

The propeptide at 1-6 is removed in mature form; by autocatalysis; that stretch reads MSGPGA. Threonine 7 acts as the Nucleophile in catalysis.

This sequence belongs to the peptidase T1B family. In terms of assembly, the 20S proteasome core is composed of 14 alpha and 14 beta subunits that assemble into four stacked heptameric rings, resulting in a barrel-shaped structure. The two inner rings, each composed of seven catalytic beta subunits, are sandwiched by two outer rings, each composed of seven alpha subunits. The catalytic chamber with the active sites is on the inside of the barrel. Has a gated structure, the ends of the cylinder being occluded by the N-termini of the alpha-subunits. Is capped at one or both ends by the proteasome regulatory ATPase, PAN.

The protein resides in the cytoplasm. The catalysed reaction is Cleavage of peptide bonds with very broad specificity.. With respect to regulation, the formation of the proteasomal ATPase PAN-20S proteasome complex, via the docking of the C-termini of PAN into the intersubunit pockets in the alpha-rings, triggers opening of the gate for substrate entry. Interconversion between the open-gate and close-gate conformations leads to a dynamic regulation of the 20S proteasome proteolysis activity. Component of the proteasome core, a large protease complex with broad specificity involved in protein degradation. In Ignicoccus hospitalis (strain KIN4/I / DSM 18386 / JCM 14125), this protein is Proteasome subunit beta 1.